Here is a 437-residue protein sequence, read N- to C-terminus: MTTFSPREIVSELDRYIVGQADAKRAVAIALRNRWRRQQLHGPLREEVAPKNILMIGPTGCGKTEISRRLARLANAPFLKVEATKFTEVGYVGRDVEQIVRDLVEVGIGLKRDEKRRSVQARAEAAAEARILDALVGPTAGQATRDSFRRRLRAGELDDKEVEIELASAAPSGLPMFEIPGVPGAAMGAINLGDMLGKALGGQKGKPRRVTVRDAHAPLMAEESDKLLDQDAIVQEAVREVEDNGIVFLDEVDKICAREGRGGADVSREGVQRDLLPLIEGTTVATKHGPVKTDHILFIASGAFHVSKPSDLLPELQGRLPIRVELAPLTVDDFRRILTETEASLLKQAVALMATEGVAVTFTEDAVDALARVAVEVNSSVENIGARRLQTVLERVLDEISFTAPDRAGESVTIDAAYVRERVESLAQNADLSRFIL.

Residues Val18, 60 to 65, Asp250, Glu315, and Arg387 each bind ATP; that span reads GCGKTE.

It belongs to the ClpX chaperone family. HslU subfamily. As to quaternary structure, a double ring-shaped homohexamer of HslV is capped on each side by a ring-shaped HslU homohexamer. The assembly of the HslU/HslV complex is dependent on binding of ATP.

The protein resides in the cytoplasm. Functionally, ATPase subunit of a proteasome-like degradation complex; this subunit has chaperone activity. The binding of ATP and its subsequent hydrolysis by HslU are essential for unfolding of protein substrates subsequently hydrolyzed by HslV. HslU recognizes the N-terminal part of its protein substrates and unfolds these before they are guided to HslV for hydrolysis. This is ATP-dependent protease ATPase subunit HslU from Methylobacterium sp. (strain 4-46).